A 436-amino-acid chain; its full sequence is MITSRTARRTFRRNSYPEHLRITAILRKETVGGALLLAATIAALIWANSPGSESYFALRDAKIGFNPFGLKLDLSLGAWASDGLLAIFFFIAGLELKREFIAGDLRRFDRAIVPIAAAIGGVAVPAIIYTLINLSSGAEILNGWAIPTATDIAFALAVLAVISTHLPTALRTFLLTLAVVDDLIAISIIAVFYPHNLQPQYLALALIPLGLFTWAVQKRIRSWYLLLPLAIITWVLVHESGVHATVAGVLLAFAVPVVRRDRNPDNGPGLAEHFEHRFRPLSAGVAVPIFAFFSAGVAIGGWAGFTNSLTDTVAIGIIAALILGKAIGIFGATFLITKTTRASLDDGLSWIDVLGLAILAGIGFTVSLLISELAFGADSPHNDHAKVAILTASLVAALLATVILRIRNQHYRKLEKLESVDADGDGVPDVFDEKDD.

A run of 11 helical transmembrane segments spans residues 31–51 (VGGA…NSPG), 74–94 (LSLG…IAGL), 112–132 (IVPI…YTLI), 143–163 (GWAI…AVIS), 173–193 (FLLT…AVFY), 196–216 (NLQP…TWAV), 222–242 (SWYL…ESGV), 285–305 (VAVP…WAGF), 315–335 (IGII…ATFL), 350–370 (WIDV…SLLI), and 384–404 (HAKV…TVIL).

The protein belongs to the NhaA Na(+)/H(+) (TC 2.A.33) antiporter family.

The protein localises to the cell membrane. The catalysed reaction is Na(+)(in) + 2 H(+)(out) = Na(+)(out) + 2 H(+)(in). Na(+)/H(+) antiporter that extrudes sodium in exchange for external protons. In Renibacterium salmoninarum (strain ATCC 33209 / DSM 20767 / JCM 11484 / NBRC 15589 / NCIMB 2235), this protein is Na(+)/H(+) antiporter NhaA.